The chain runs to 408 residues: Phosphoglycerate kinase (408 aa).

Substrate contacts are provided by residues aspartate 22–asparagine 24, arginine 39, histidine 60–arginine 63, arginine 117, and arginine 157. Residues glutamate 332 and glycine 358–threonine 361 contribute to the ATP site.

It belongs to the phosphoglycerate kinase family. In terms of assembly, monomer.

The protein resides in the cytoplasm. It carries out the reaction (2R)-3-phosphoglycerate + ATP = (2R)-3-phospho-glyceroyl phosphate + ADP. Its pathway is carbohydrate degradation; glycolysis; pyruvate from D-glyceraldehyde 3-phosphate: step 2/5. The sequence is that of Phosphoglycerate kinase (pgk) from Thermoplasma acidophilum (strain ATCC 25905 / DSM 1728 / JCM 9062 / NBRC 15155 / AMRC-C165).